We begin with the raw amino-acid sequence, 951 residues long: Bifunctional glutamine synthetase adenylyltransferase/adenylyl-removing enzyme (951 aa).

The segment at 1–445 (MSILPLPALP…VFDELIGDDA (445 aa)) is adenylyl removase. Positions 454 to 951 (HSSYSSLWQD…VSWNKWLMGA (498 aa)) are adenylyl transferase.

It belongs to the GlnE family. It depends on Mg(2+) as a cofactor.

It catalyses the reaction [glutamine synthetase]-O(4)-(5'-adenylyl)-L-tyrosine + phosphate = [glutamine synthetase]-L-tyrosine + ADP. The catalysed reaction is [glutamine synthetase]-L-tyrosine + ATP = [glutamine synthetase]-O(4)-(5'-adenylyl)-L-tyrosine + diphosphate. Functionally, involved in the regulation of glutamine synthetase GlnA, a key enzyme in the process to assimilate ammonia. When cellular nitrogen levels are high, the C-terminal adenylyl transferase (AT) inactivates GlnA by covalent transfer of an adenylyl group from ATP to specific tyrosine residue of GlnA, thus reducing its activity. Conversely, when nitrogen levels are low, the N-terminal adenylyl removase (AR) activates GlnA by removing the adenylyl group by phosphorolysis, increasing its activity. The regulatory region of GlnE binds the signal transduction protein PII (GlnB) which indicates the nitrogen status of the cell. The chain is Bifunctional glutamine synthetase adenylyltransferase/adenylyl-removing enzyme from Pectobacterium atrosepticum (strain SCRI 1043 / ATCC BAA-672) (Erwinia carotovora subsp. atroseptica).